Consider the following 78-residue polypeptide: Delta-conotoxin-like CVIE (78 aa).

Positions 1–22 are cleaved as a signal peptide; sequence MKLTCMMIVAVLFLTAWTFVTA. Residues 23–49 constitute a propeptide that is removed on maturation; that stretch reads DDSRNGLKNLFPKARHEMKNPEASKLN. Intrachain disulfides connect Cys-54-Cys-69, Cys-61-Cys-73, and Cys-68-Cys-77. Pro-65 is modified (4-hydroxyproline).

Belongs to the conotoxin O1 superfamily. Expressed by the venom duct.

The protein resides in the secreted. In terms of biological role, delta-conotoxins bind to site 6 of voltage-gated sodium channels (Nav) and inhibit the inactivation process. This chain is Delta-conotoxin-like CVIE, found in Conus catus (Cat cone).